Reading from the N-terminus, the 490-residue chain is MVSSITRIQNYVIDGAATSDGLATVLESNFAPSLISLPATPLFGTDGIRGKVGELLSAPLALQIGFWAGVVLRSHAGQLRPVILGQDSRNSSDMLAMALSAGLTAAGLEVWYLGLCPTPCVAYLTSVSEAIGGVMISASHNPPEDNGIKIFGANGGKLSQALQAEIEKGLRGNLPITSNVSNCGRHYSRRELVKDYGEALKRPWQNKVNLQGMKVVLDLAWGAAVGLAPSVFAEMGAEVISLHNAADGDRINVNCGSTHLEMLQAAVQEHNADLGFAFDGDADRVLAVDPTGRPVNGDYILYLWGLHLKQQNQLPDNLIVSTVMANLGFEKAWQQQGGKLIRTAVGDQYVQAEMIKTGAMLGGEQSGHILCSHYGMTGDGLLTALHLASLVKQSGVSLAELIDQSFQTYPQLLRNVRVVDRDRRLNWQNCTPVQQAIALAEKAMGDTGRILVRASGTEPVIRVMVEAANAELANYWTNELVAQVQQHLAP.

Ser139 serves as the catalytic Phosphoserine intermediate. Residues Ser139, Asp279, Asp281, and Asp283 each contribute to the Mg(2+) site. Residue Ser139 is modified to Phosphoserine.

The protein belongs to the phosphohexose mutase family. Requires Mg(2+) as cofactor. Activated by phosphorylation.

The enzyme catalyses alpha-D-glucosamine 1-phosphate = D-glucosamine 6-phosphate. In terms of biological role, catalyzes the conversion of glucosamine-6-phosphate to glucosamine-1-phosphate. In Trichormus variabilis (strain ATCC 29413 / PCC 7937) (Anabaena variabilis), this protein is Phosphoglucosamine mutase.